The sequence spans 422 residues: Carboxypeptidase B2 (422 aa).

The N-terminal stretch at 1–21 (MKLHGLGILVAIILYEQHGFA) is a signal peptide. Residues 22-113 (FQSGQVLSAL…QTFNDTVSPR (92 aa)) constitute a propeptide, activation peptide. Asparagine 43, asparagine 72, asparagine 84, and asparagine 107 each carry an N-linked (GlcNAc...) asparagine glycan. The 298-residue stretch at 121-418 (QYHSLNEIYS…AAISKIVWHV (298 aa)) folds into the Peptidase M14 domain. Residues cysteine 177 and cysteine 190 are joined by a disulfide bond. The Zn(2+) site is built by histidine 180 and glutamate 183. Residues 180–183 (HARE) and arginine 238 each bind substrate. N-linked (GlcNAc...) asparagine glycosylation occurs at asparagine 240. Cystine bridges form between cysteine 249/cysteine 273 and cysteine 264/cysteine 278. 255–256 (NR) is a substrate binding site. Histidine 309 contacts Zn(2+). 310-311 (SY) is a substrate binding site. An N-linked (GlcNAc...) asparagine glycan is attached at asparagine 322. A substrate-binding site is contributed by tyrosine 362. The active-site Proton donor/acceptor is glutamate 384.

This sequence belongs to the peptidase M14 family. It depends on Zn(2+) as a cofactor. In terms of tissue distribution, plasma; synthesized in the liver.

The protein resides in the secreted. It carries out the reaction Release of C-terminal Arg and Lys from a polypeptide.. TAFI/CPB2 is unique among carboxypeptidases in that it spontaneously inactivates with a short half-life, a property that is crucial for its role in controlling blood clot lysis. The zymogen is stabilized by interactions with the activation peptide. Release of the activation peptide increases a dynamic flap mobility and in time this leads to conformational changes that disrupt the catalytic site and expose a cryptic thrombin-cleavage site present at Arg-323. Functionally, cleaves C-terminal arginine or lysine residues from biologically active peptides such as kinins or anaphylatoxins in the circulation thereby regulating their activities. Down-regulates fibrinolysis by removing C-terminal lysine residues from fibrin that has already been partially degraded by plasmin. The protein is Carboxypeptidase B2 (Cpb2) of Mus musculus (Mouse).